Reading from the N-terminus, the 115-residue chain is Promotilin (115 aa).

The first 25 residues, 1–25 (MVSRKAVAALLVVHVAAMLASQTEA), serve as a signal peptide directing secretion. The tract at residues 39-72 (QEKERNKGQKKSLSVWQRSGEEGPVDPAEPIREE) is disordered.

Belongs to the motilin family.

It is found in the secreted. Plays an important role in the regulation of interdigestive gastrointestinal motility and indirectly causes rhythmic contraction of duodenal and colonic smooth muscle. In Homo sapiens (Human), this protein is Promotilin (MLN).